The following is a 585-amino-acid chain: tRNA-guanine(15) transglycosylase (585 aa).

The active-site Nucleophile is Asp-95. Asp-130 and Ala-196 together coordinate substrate. Zn(2+)-binding residues include Cys-279, Cys-281, and Cys-284. Residues 507–582 (VMRVVVNKEA…RAVKTRRGVE (76 aa)) enclose the PUA domain.

It belongs to the archaeosine tRNA-ribosyltransferase family. Zn(2+) is required as a cofactor.

The enzyme catalyses guanosine(15) in tRNA + 7-cyano-7-deazaguanine = 7-cyano-7-carbaguanosine(15) in tRNA + guanine. The protein operates within tRNA modification; archaeosine-tRNA biosynthesis. In terms of biological role, exchanges the guanine residue with 7-cyano-7-deazaguanine (preQ0) at position 15 in the dihydrouridine loop (D-loop) of archaeal tRNAs. This chain is tRNA-guanine(15) transglycosylase, found in Pyrococcus furiosus (strain ATCC 43587 / DSM 3638 / JCM 8422 / Vc1).